Consider the following 709-residue polypeptide: MARATPLNRYRNIGISAHIDAGKTTTTERILFYTGVSHKIGETHEGSATMDWMEQEQERGITITSAATTCFWSGMGQQFPQHRINIIDTPGHVDFTIEVERSMRVLDGACMVYCAVGGVQPQSETVWRQANKYKVPRLAFVNKMDRVGADFYRVKEQVKTRLGGNPVAMVIPIGKEDDFEGVIDLITMKAIYWDVESLGMKFEEREIPEELQEKAEEYRSELVEVAAEANEDLMNKYLEGEELTEDEIHAAIRQRTINNEIIPMYCGTAFKNKGVQKMLDAVIQYMPAPQDVPAIKGILDDKAETEGTREASDDAPFAALAFKIMNDKFVGNLTFVRVYSGVIKQGESVYNPVKMKRERIGRIVQMHADSQQELDEIRAGDIAALVGMKDVGTGDTLCDEKEIITLERMEFPEPVISLAVEPKTKADQEKMSIALGRLAKEDPSFRVHTDEESGQTIISGMGELHLEILVDRMKREFKVEANIGAPQVAYRETIRGTVEQEGKFVRQTGGRGKFGHVWLKLEPLDLDSGVDYQFEEQVVGGVVPKEYHGAVDKGIQERMKNGILAGYPIVGVKATLYDGSYHDVDSDELSFKMAGSIAFKKGFMNANPVLLEPVMKVEVETPEEYMGDIMGDLNRRRGMVQGMDDLPGGTKQIRAEVPLAEMFGYATNVRSMSQGRATYSMEFQKYAETPKSVAEEIMKKFSGKDDDEE.

A tr-type G domain is found at 8-290 (NRYRNIGISA…AVIQYMPAPQ (283 aa)). Residues 17–24 (AHIDAGKT), 88–92 (DTPGH), and 142–145 (NKMD) contribute to the GTP site.

The protein belongs to the TRAFAC class translation factor GTPase superfamily. Classic translation factor GTPase family. EF-G/EF-2 subfamily.

Its subcellular location is the cytoplasm. Functionally, catalyzes the GTP-dependent ribosomal translocation step during translation elongation. During this step, the ribosome changes from the pre-translocational (PRE) to the post-translocational (POST) state as the newly formed A-site-bound peptidyl-tRNA and P-site-bound deacylated tRNA move to the P and E sites, respectively. Catalyzes the coordinated movement of the two tRNA molecules, the mRNA and conformational changes in the ribosome. This chain is Elongation factor G, found in Psychrobacter sp. (strain PRwf-1).